Consider the following 1791-residue polypeptide: Protein TIC 214 (1791 aa).

6 helical membrane-spanning segments follow: residues 19–39, 68–88, 91–111, 133–153, 176–196, and 230–250; these read IINS…FSIG, FIAG…HLAL, PHTI…WNNH, VFLN…SSML, VGWL…LVWI, and IFSI…PSPI. The segment covering 257-271 has biased composition (basic and acidic residues); the sequence is GTSETEERGGTKQDQ. Disordered stretches follow at residues 257–278 and 1498–1521; these read GTSE…TEEA and ADQG…PNQE.

The protein belongs to the TIC214 family. As to quaternary structure, part of the Tic complex.

The protein resides in the plastid. It localises to the chloroplast inner membrane. Functionally, involved in protein precursor import into chloroplasts. May be part of an intermediate translocation complex acting as a protein-conducting channel at the inner envelope. This Aethionema grandiflorum (Persian stone-cress) protein is Protein TIC 214.